The primary structure comprises 213 residues: MTDKAHQCVIIGIAGASASGKSLIASTLYRELREQVGDQHIGVIPEDGYYKDQSHLSMEERVKTNYDHPSAMDHNLLLEHLQALKAGKPVELPLYSYTEHTRKKETVHLEPKKVIILEGILLLTDIRLRQEMNFSIFVDTPLDICLMRRMKRDVNERGRSMDSVMAQYQKTVRPMFLQFIEPSKQYADIIVPRGGKNRIAIDILKAKISQFFE.

ATP is bound at residue 15–22 (GASASGKS).

It belongs to the uridine kinase family.

It localises to the cytoplasm. The catalysed reaction is uridine + ATP = UMP + ADP + H(+). It carries out the reaction cytidine + ATP = CMP + ADP + H(+). The protein operates within pyrimidine metabolism; CTP biosynthesis via salvage pathway; CTP from cytidine: step 1/3. Its pathway is pyrimidine metabolism; UMP biosynthesis via salvage pathway; UMP from uridine: step 1/1. In Yersinia pseudotuberculosis serotype O:1b (strain IP 31758), this protein is Uridine kinase.